A 142-amino-acid chain; its full sequence is 3-hydroxyacyl-[acyl-carrier-protein] dehydratase FabZ (142 aa).

His48 is an active-site residue.

This sequence belongs to the thioester dehydratase family. FabZ subfamily.

It localises to the cytoplasm. The catalysed reaction is a (3R)-hydroxyacyl-[ACP] = a (2E)-enoyl-[ACP] + H2O. Involved in unsaturated fatty acids biosynthesis. Catalyzes the dehydration of short chain beta-hydroxyacyl-ACPs and long chain saturated and unsaturated beta-hydroxyacyl-ACPs. The polypeptide is 3-hydroxyacyl-[acyl-carrier-protein] dehydratase FabZ (Clostridioides difficile (strain 630) (Peptoclostridium difficile)).